Here is a 967-residue protein sequence, read N- to C-terminus: uncharacterized protein (967 aa).

An N-terminal signal peptide occupies residues 1–29; that stretch reads MKKKLKSVLIWFLIFTFNLSLGSFREVFA. 2 BIG2 domains span residues 38–107 and 133–190; these read TAIT…QDGS and LPVG…VNDG.

This is an uncharacterized protein from Clostridium acetobutylicum (strain ATCC 824 / DSM 792 / JCM 1419 / IAM 19013 / LMG 5710 / NBRC 13948 / NRRL B-527 / VKM B-1787 / 2291 / W).